Here is a 90-residue protein sequence, read N- to C-terminus: ATP synthase subunit c (90 aa).

Transmembrane regions (helical) follow at residues 17-37 and 70-90; these read PLAY…AGVV and LAIV…IIFV.

It belongs to the ATPase C chain family. In terms of assembly, F-type ATPases have 2 components, F(1) - the catalytic core - and F(0) - the membrane proton channel. F(1) has five subunits: alpha(3), beta(3), gamma(1), delta(1), epsilon(1). F(0) has three main subunits: a(1), b(2) and c(10-14). The alpha and beta chains form an alternating ring which encloses part of the gamma chain. F(1) is attached to F(0) by a central stalk formed by the gamma and epsilon chains, while a peripheral stalk is formed by the delta and b chains.

The protein resides in the cell membrane. In terms of biological role, f(1)F(0) ATP synthase produces ATP from ADP in the presence of a proton or sodium gradient. F-type ATPases consist of two structural domains, F(1) containing the extramembraneous catalytic core and F(0) containing the membrane proton channel, linked together by a central stalk and a peripheral stalk. During catalysis, ATP synthesis in the catalytic domain of F(1) is coupled via a rotary mechanism of the central stalk subunits to proton translocation. Key component of the F(0) channel; it plays a direct role in translocation across the membrane. A homomeric c-ring of between 10-14 subunits forms the central stalk rotor element with the F(1) delta and epsilon subunits. This Metamycoplasma arthritidis (strain 158L3-1) (Mycoplasma arthritidis) protein is ATP synthase subunit c.